Reading from the N-terminus, the 297-residue chain is N-acetylmuramic acid 6-phosphate etherase (297 aa).

The 164-residue stretch at 55–218 folds into the SIS domain; sequence AAAALTRGGR…STGAMVKCGK (164 aa). The active-site Proton donor is the Glu-83. The active site involves Glu-114.

Belongs to the GCKR-like family. MurNAc-6-P etherase subfamily. Homodimer.

The enzyme catalyses N-acetyl-D-muramate 6-phosphate + H2O = N-acetyl-D-glucosamine 6-phosphate + (R)-lactate. It functions in the pathway amino-sugar metabolism; 1,6-anhydro-N-acetylmuramate degradation. It participates in amino-sugar metabolism; N-acetylmuramate degradation. The protein operates within cell wall biogenesis; peptidoglycan recycling. Specifically catalyzes the cleavage of the D-lactyl ether substituent of MurNAc 6-phosphate, producing GlcNAc 6-phosphate and D-lactate. Together with AnmK, is also required for the utilization of anhydro-N-acetylmuramic acid (anhMurNAc) either imported from the medium or derived from its own cell wall murein, and thus plays a role in cell wall recycling. In Cronobacter sakazakii (strain ATCC BAA-894) (Enterobacter sakazakii), this protein is N-acetylmuramic acid 6-phosphate etherase.